The following is a 363-amino-acid chain: Chorismate synthase (363 aa).

Residues Arg-48 and Arg-54 each coordinate NADP(+). Residues 125–127, 237–238, Gly-277, 292–296, and Arg-318 each bind FMN; these read RSS, NA, and KPTSS.

The protein belongs to the chorismate synthase family. In terms of assembly, homotetramer. The cofactor is FMNH2.

The catalysed reaction is 5-O-(1-carboxyvinyl)-3-phosphoshikimate = chorismate + phosphate. It functions in the pathway metabolic intermediate biosynthesis; chorismate biosynthesis; chorismate from D-erythrose 4-phosphate and phosphoenolpyruvate: step 7/7. In terms of biological role, catalyzes the anti-1,4-elimination of the C-3 phosphate and the C-6 proR hydrogen from 5-enolpyruvylshikimate-3-phosphate (EPSP) to yield chorismate, which is the branch point compound that serves as the starting substrate for the three terminal pathways of aromatic amino acid biosynthesis. This reaction introduces a second double bond into the aromatic ring system. This Pseudomonas putida (strain GB-1) protein is Chorismate synthase.